The following is a 185-amino-acid chain: Urease accessory protein UreE (185 aa).

The disordered stretch occupies residues 153 to 185 (LRANSAQGHGHSHSHSHDHHGYHHHGDGNWHKH). Residues 162–175 (GHSHSHSHDHHGYH) show a composition bias toward basic residues. Residues 176–185 (HHGDGNWHKH) show a composition bias toward basic and acidic residues.

This sequence belongs to the UreE family.

The protein localises to the cytoplasm. Functionally, involved in urease metallocenter assembly. Binds nickel. Probably functions as a nickel donor during metallocenter assembly. In Haemophilus influenzae (strain PittGG), this protein is Urease accessory protein UreE.